The following is a 95-amino-acid chain: Large ribosomal subunit protein uL23 (95 aa).

The protein belongs to the universal ribosomal protein uL23 family. In terms of assembly, part of the 50S ribosomal subunit. Contacts protein L29, and trigger factor when it is bound to the ribosome.

Its function is as follows. One of the early assembly proteins it binds 23S rRNA. One of the proteins that surrounds the polypeptide exit tunnel on the outside of the ribosome. Forms the main docking site for trigger factor binding to the ribosome. In Anoxybacillus flavithermus (strain DSM 21510 / WK1), this protein is Large ribosomal subunit protein uL23.